The sequence spans 227 residues: 2,3-bisphosphoglycerate-dependent phosphoglycerate mutase (227 aa).

Residues 8–15 (RHGKSVWN), 21–22 (TG), Arg58, 110–113 (ERMY), Lys121, 137–138 (RR), and 181–182 (GN) contribute to the substrate site. The active-site Tele-phosphohistidine intermediate is the His9. Catalysis depends on Glu110, which acts as the Proton donor/acceptor.

Belongs to the phosphoglycerate mutase family. BPG-dependent PGAM subfamily.

It carries out the reaction (2R)-2-phosphoglycerate = (2R)-3-phosphoglycerate. It participates in carbohydrate degradation; glycolysis; pyruvate from D-glyceraldehyde 3-phosphate: step 3/5. Its function is as follows. Catalyzes the interconversion of 2-phosphoglycerate and 3-phosphoglycerate. This chain is 2,3-bisphosphoglycerate-dependent phosphoglycerate mutase, found in Chlamydia abortus (strain DSM 27085 / S26/3) (Chlamydophila abortus).